Consider the following 357-residue polypeptide: 2-oxoglutarate-dependent dioxygenase 11 (357 aa).

One can recognise a Fe2OG dioxygenase domain in the interval 207–307 (QPRGLRMAYY…RISAALFHYP (101 aa)). 3 residues coordinate Fe cation: H231, D233, and H288. 2-oxoglutarate is bound at residue R298.

It belongs to the iron/ascorbate-dependent oxidoreductase family. Fe(2+) serves as cofactor. It depends on L-ascorbate as a cofactor. Expressed in shoots.

It localises to the cytoplasm. The catalysed reaction is melatonin + 2-oxoglutarate + O2 = 2-hydroxymelatonin + succinate + CO2. Functionally, involved in melatonin degradation. Catalyzes the hydroxylation of melatonin to produce 2-hydroxymelatonin. The sequence is that of 2-oxoglutarate-dependent dioxygenase 11 from Oryza sativa subsp. japonica (Rice).